The sequence spans 382 residues: MNSTLFSKVENHSIHYNASENSPLLAFENDDCHLPLAVIFTLALAYGAVIILGVSGNLALIIIILKQKEMRNVTNILIVNLSFSDLLVAVMCLPFTFVYTLMDHWVFGETMCKLNPFVQCVSITVSIFSLVLIAVERHQLIINPRGWRPNNRHAYIGITVIWVLAVASSLPFVIYQILTDEPFQNVSLAAFKDKYVCFDKFPSDSHRLSYTTLLLVLQYFGPLCFIFICYFKIYIRLKRRNNMMDKIRDSKYRSSETKRINIMLLSIVVAFAVCWLPLTIFNTVFDWNHQIIATCNHNLLFLLCHLTAMISTCVNPIFYGFLNKNFQRDLQFFFNFCDFRSRDDDYETIAMSTMHTDVSKTSLKQASPVAFKKISMNDNEKV.

Residues 1-33 (MNSTLFSKVENHSIHYNASENSPLLAFENDDCH) are Extracellular-facing. Asn2, Asn11, and Asn17 each carry an N-linked (GlcNAc...) asparagine glycan. Residues 34-54 (LPLAVIFTLALAYGAVIILGV) traverse the membrane as a helical segment. The Cytoplasmic segment spans residues 55–75 (SGNLALIIIILKQKEMRNVTN). The helical transmembrane segment at 76–96 (ILIVNLSFSDLLVAVMCLPFT) threads the bilayer. The Extracellular segment spans residues 97–115 (FVYTLMDHWVFGETMCKLN). A disulfide bridge links Cys112 with Cys197. A helical membrane pass occupies residues 116–136 (PFVQCVSITVSIFSLVLIAVE). At 137-153 (RHQLIINPRGWRPNNRH) the chain is on the cytoplasmic side. The helical transmembrane segment at 154–174 (AYIGITVIWVLAVASSLPFVI) threads the bilayer. Residues 175–210 (YQILTDEPFQNVSLAAFKDKYVCFDKFPSDSHRLSY) are Extracellular-facing. The chain crosses the membrane as a helical span at residues 211–231 (TTLLLVLQYFGPLCFIFICYF). Residues 232 to 259 (KIYIRLKRRNNMMDKIRDSKYRSSETKR) are Cytoplasmic-facing. A helical transmembrane segment spans residues 260 to 280 (INIMLLSIVVAFAVCWLPLTI). The Extracellular segment spans residues 281 to 298 (FNTVFDWNHQIIATCNHN). Residues 299 to 319 (LLFLLCHLTAMISTCVNPIFY) form a helical membrane-spanning segment. The Cytoplasmic portion of the chain corresponds to 320–382 (GFLNKNFQRD…KISMNDNEKV (63 aa)). Residue Cys337 is the site of S-palmitoyl cysteine attachment. A phosphoserine mark is found at Ser367 and Ser375.

It belongs to the G-protein coupled receptor 1 family. As to expression, the alpha form is highly expressed in the brain, heart, kidney, spleen, skeletal muscle, and lung, whereas the beta receptor mRNA was not detected in these tissues. However, the beta form is expressed in mouse embryonic developmental stage (7 and 11 days), bone marrow cells and several hematopoietic cell lines.

The protein localises to the cell membrane. Its function is as follows. Receptor for neuropeptide Y and peptide YY. The sequence is that of Neuropeptide Y receptor type 1 (Npy1r) from Mus musculus (Mouse).